Consider the following 187-residue polypeptide: CASP-like protein 3A2 (187 aa).

Residues 1 to 24 (MTSNGEGGEVVAKRRRKGIKELVQ) are Cytoplasmic-facing. The chain crosses the membrane as a helical span at residues 25–45 (VALRGGCLAASATAMAVMLTA). The Extracellular portion of the chain corresponds to 46 to 71 (TEEGVADIYGFKLTLSSNWSFSPSYQ). The N-linked (GlcNAc...) asparagine glycan is linked to Asn63. The chain crosses the membrane as a helical span at residues 72–92 (YVVGACAGTVLYSLLQLCLGV). The Cytoplasmic portion of the chain corresponds to 93-107 (YRLVTGSPITPSRFQ). Residues 108–128 (AWLCFTSDQLFCYLMMSAGSA) form a helical membrane-spanning segment. Residues 129 to 162 (GSGVTNLNKTGIRHTPLPDFCKTLSSFCNHVALS) lie on the Extracellular side of the membrane. Asn136 carries an N-linked (GlcNAc...) asparagine glycan. The chain crosses the membrane as a helical span at residues 163–183 (LLLVFLSFIFLASSSFFTVLV). Residues 184–187 (LSTP) are Cytoplasmic-facing.

This sequence belongs to the Casparian strip membrane proteins (CASP) family. As to quaternary structure, homodimer and heterodimers.

The protein resides in the cell membrane. The protein is CASP-like protein 3A2 of Arabidopsis thaliana (Mouse-ear cress).